Reading from the N-terminus, the 526-residue chain is Exodeoxyribonuclease 7 large subunit (526 aa).

The segment at 497–526 (AMTTEGGTPPAGAKKRSTKPAEPPKQGSLF) is disordered.

This sequence belongs to the XseA family. In terms of assembly, heterooligomer composed of large and small subunits.

The protein resides in the cytoplasm. It catalyses the reaction Exonucleolytic cleavage in either 5'- to 3'- or 3'- to 5'-direction to yield nucleoside 5'-phosphates.. In terms of biological role, bidirectionally degrades single-stranded DNA into large acid-insoluble oligonucleotides, which are then degraded further into small acid-soluble oligonucleotides. The polypeptide is Exodeoxyribonuclease 7 large subunit (Rhizobium johnstonii (strain DSM 114642 / LMG 32736 / 3841) (Rhizobium leguminosarum bv. viciae)).